The following is a 1221-amino-acid chain: WEB family protein At4g27595, chloroplastic (1221 aa).

The tract at residues 1 to 68 (MASRTKTGLM…VSDRRTARVP (68 aa)) is disordered. The transit peptide at 1–82 (MASRTKTGLM…ANYFLIIICM (82 aa)) directs the protein to the chloroplast. A compositionally biased stretch (polar residues) spans 32–58 (SDGNSPSPVQSTRLSIDRSPQTVNSKP). 3 coiled-coil regions span residues 95–149 (TGLL…AAQH), 202–543 (TEEL…FNSK), and 587–1084 (AAKE…GEEI). The segment covering 1073 to 1083 (EASSTHEKGEE) has biased composition (basic and acidic residues). The tract at residues 1073–1221 (EASSTHEKGE…LLKKKSSSQK (149 aa)) is disordered. Residues 1084–1097 (ITNTNPFDNSTGEQ) are compositionally biased toward polar residues. 2 stretches are compositionally biased toward basic and acidic residues: residues 1106–1116 (AIDRHLKDDTT) and 1129–1160 (KGEK…TEHD). Over residues 1175–1187 (NFDQLSNGLSLAE) the composition is skewed to polar residues.

It belongs to the WEB family.

The protein resides in the plastid. It is found in the chloroplast. The sequence is that of WEB family protein At4g27595, chloroplastic from Arabidopsis thaliana (Mouse-ear cress).